The following is a 354-amino-acid chain: UDP-N-acetylglucosamine--N-acetylmuramyl-(pentapeptide) pyrophosphoryl-undecaprenol N-acetylglucosamine transferase (354 aa).

UDP-N-acetyl-alpha-D-glucosamine is bound by residues 13 to 15 (SGG), N125, S189, I242, 261 to 266 (ALTVSE), and Q286.

It belongs to the glycosyltransferase 28 family. MurG subfamily.

The protein resides in the cell inner membrane. It catalyses the reaction di-trans,octa-cis-undecaprenyl diphospho-N-acetyl-alpha-D-muramoyl-L-alanyl-D-glutamyl-meso-2,6-diaminopimeloyl-D-alanyl-D-alanine + UDP-N-acetyl-alpha-D-glucosamine = di-trans,octa-cis-undecaprenyl diphospho-[N-acetyl-alpha-D-glucosaminyl-(1-&gt;4)]-N-acetyl-alpha-D-muramoyl-L-alanyl-D-glutamyl-meso-2,6-diaminopimeloyl-D-alanyl-D-alanine + UDP + H(+). Its pathway is cell wall biogenesis; peptidoglycan biosynthesis. In terms of biological role, cell wall formation. Catalyzes the transfer of a GlcNAc subunit on undecaprenyl-pyrophosphoryl-MurNAc-pentapeptide (lipid intermediate I) to form undecaprenyl-pyrophosphoryl-MurNAc-(pentapeptide)GlcNAc (lipid intermediate II). The polypeptide is UDP-N-acetylglucosamine--N-acetylmuramyl-(pentapeptide) pyrophosphoryl-undecaprenol N-acetylglucosamine transferase (Buchnera aphidicola subsp. Acyrthosiphon pisum (strain 5A)).